An 81-amino-acid polypeptide reads, in one-letter code: MRLVVCLVFLASFALVCQGQVYKGGYTRPIPRPPFVRPVPGGPIGPYNGCPVSCRGISFSQARSCCSRLGRCCHVGKGYSG.

The first 19 residues, 1 to 19 (MRLVVCLVFLASFALVCQG), serve as a signal peptide directing secretion. Gln-20 is modified (pyrrolidone carboxylic acid). 3 disulfides stabilise this stretch: Cys-50–Cys-65, Cys-54–Cys-72, and Cys-66–Cys-73. A Serine amide modification is found at Ser-80.

It belongs to the penaeidin family. In terms of tissue distribution, higher expression in hemocytes and to a lesser extent in heart, testis, gills, intestine, lymphoid organ and hepatopancreas. Traces in eyes and subcuticular epithelium. Not present in the brain.

The protein localises to the cytoplasmic granule. Functionally, antibacterial activity against M.luteus and E.coli bacteria. Antifungal activity against N.crassa and F.oxysporum. Presents chitin-binding activity. The polypeptide is Penaeidin-3c (Penaeus vannamei (Whiteleg shrimp)).